Here is a 370-residue protein sequence, read N- to C-terminus: Homospermidine synthase (370 aa).

It belongs to the deoxyhypusine synthase family. In terms of assembly, homotetramer. The cofactor is NAD(+).

It catalyses the reaction putrescine + spermidine = sym-homospermidine + propane-1,3-diamine. It participates in alkaloid biosynthesis; pyrrolizidine alkaloid biosynthesis. In terms of biological role, catalyzes the transfer of an aminobutyl unit from spermidine onto putrescine. The resulting polyamine homospermidine is a precursor in the biosynthesis of pyrrolizidine alkaloids. The polypeptide is Homospermidine synthase (HSS1) (Senecio vulgaris (Common groundsel)).